A 279-amino-acid polypeptide reads, in one-letter code: 4-diphosphocytidyl-2-C-methyl-D-erythritol kinase (279 aa).

K9 is an active-site residue. 93 to 103 serves as a coordination point for ATP; the sequence is PMGAGLGGGSS. The active site involves D135.

Belongs to the GHMP kinase family. IspE subfamily.

It catalyses the reaction 4-CDP-2-C-methyl-D-erythritol + ATP = 4-CDP-2-C-methyl-D-erythritol 2-phosphate + ADP + H(+). It participates in isoprenoid biosynthesis; isopentenyl diphosphate biosynthesis via DXP pathway; isopentenyl diphosphate from 1-deoxy-D-xylulose 5-phosphate: step 3/6. Functionally, catalyzes the phosphorylation of the position 2 hydroxy group of 4-diphosphocytidyl-2C-methyl-D-erythritol. The polypeptide is 4-diphosphocytidyl-2-C-methyl-D-erythritol kinase (Acinetobacter baylyi (strain ATCC 33305 / BD413 / ADP1)).